The following is a 176-amino-acid chain: Transmembrane protein 238 (176 aa).

A disordered region spans residues 1-21; sequence MAAASPVCGSQASAVGASSPP. Residues 1 to 36 are Cytoplasmic-facing; that stretch reads MAAASPVCGSQASAVGASSPPAPAPAPAAGLGRCRM. Positions 9–19 are enriched in low complexity; the sequence is GSQASAVGASS. The chain crosses the membrane as a helical span at residues 37 to 57; that stretch reads ALLLAVALDVAGMAALLTGVF. Residues 58-69 lie on the Extracellular side of the membrane; sequence AQLQVRGRDFGD. Residues 70-90 form a helical membrane-spanning segment; it reads LLIYSGALLVFLSLLGWILWY. Over 91 to 176 the chain is Cytoplasmic; sequence TGNIEISRQE…GSVAAGTGSE (86 aa). Over residues 124 to 135 the composition is skewed to low complexity; it reads SAPATASPRTTA. The disordered stretch occupies residues 124-156; that stretch reads SAPATASPRTTAGLRSARRANRAPQPSSSGSRR. A Phosphoserine modification is found at Ser175.

It is found in the membrane. The chain is Transmembrane protein 238 (Tmem238) from Mus musculus (Mouse).